Reading from the N-terminus, the 348-residue chain is L-threonine 3-dehydrogenase (348 aa).

C42 lines the Zn(2+) pocket. Residues T44 and H47 each act as charge relay system in the active site. Residues H67, E68, C97, C100, C103, and C111 each coordinate Zn(2+). Residues L179, E199, R204, 266–268 (LGL), and 291–292 (IT) contribute to the NAD(+) site.

It belongs to the zinc-containing alcohol dehydrogenase family. In terms of assembly, homotetramer. It depends on Zn(2+) as a cofactor.

The protein localises to the cytoplasm. The enzyme catalyses L-threonine + NAD(+) = (2S)-2-amino-3-oxobutanoate + NADH + H(+). Its pathway is amino-acid degradation; L-threonine degradation via oxydo-reductase pathway; glycine from L-threonine: step 1/2. In terms of biological role, catalyzes the NAD(+)-dependent oxidation of L-threonine to 2-amino-3-ketobutyrate. The protein is L-threonine 3-dehydrogenase of Pyrococcus abyssi (strain GE5 / Orsay).